We begin with the raw amino-acid sequence, 266 residues long: Type 1 encapsulin shell protein (266 aa).

The protein belongs to the encapsulin family. Family 1 subfamily. In terms of assembly, homomultimeric. This encapsulin nanocompartment is formed by 60 subunits, and encloses one Dyp homohexamer; partially assembled 58-subunit compartments with and without cargo are also purified. May assemble the shell from dimers. Monomers form pentamers, which assemble to form hollow shells with pores 5-8 Angstroms in diameter where 3 pentamers meet.

Its subcellular location is the encapsulin nanocompartment. Its function is as follows. Shell component of a type 1 encapsulin nanocompartment. Assembles into proteinaceous shells 23-24 nm in diameter with 2-2.5 nm thick walls. Endogenous cargo protein DyP (dye-decolorizing peroxidase) is targeted to the interior via its C-terminal extension; only 1 DyP hexamer is incorporated into each shell. Empty shells can be isolated in the absence of cargo. Cargo encapsulation probably precedes assembly of the nanocompartment; may assemble or disassemble via dimers, subcomplexes with a distinct preference for even numbers of subunits are detected. Nanocompartments are stable against mechanical forces; loaded nanocompartments are less stable than empty ones. Nanocompartments are stable between pH 5-10; they aggregate at pH 9-10 and start to disassemble at pH 11. They are stable in 1M NaCl, 1 M MgCl(2) and 1M CaCl(2), unstable in 20% DMSO (dimethylsulfoxide) and are stable in 20% but not 40% ethanol. This Brevibacterium linens protein is Type 1 encapsulin shell protein.